The following is a 237-amino-acid chain: Protein GrpE (237 aa).

Disordered stretches follow at residues 27-51 and 202-237; these read EDRE…LSET and AVSS…PQHS. 2 stretches are compositionally biased toward low complexity: residues 33 to 45 and 204 to 213; these read ASTS…AEAS and SSGSPTSEPS. Positions 227-237 are enriched in polar residues; it reads TPASPQNPQHS.

It belongs to the GrpE family. In terms of assembly, homodimer.

It is found in the cytoplasm. Its function is as follows. Participates actively in the response to hyperosmotic and heat shock by preventing the aggregation of stress-denatured proteins, in association with DnaK and GrpE. It is the nucleotide exchange factor for DnaK and may function as a thermosensor. Unfolded proteins bind initially to DnaJ; upon interaction with the DnaJ-bound protein, DnaK hydrolyzes its bound ATP, resulting in the formation of a stable complex. GrpE releases ADP from DnaK; ATP binding to DnaK triggers the release of the substrate protein, thus completing the reaction cycle. Several rounds of ATP-dependent interactions between DnaJ, DnaK and GrpE are required for fully efficient folding. The sequence is that of Protein GrpE from Synechococcus sp. (strain JA-3-3Ab) (Cyanobacteria bacterium Yellowstone A-Prime).